A 327-amino-acid chain; its full sequence is Thiamine thiazole synthase (327 aa).

Residues Cys86, 107-108, Gly115, and Val182 contribute to the substrate site; that span reads EA. The residue at position 216 (Cys216) is a 2,3-didehydroalanine (Cys). Substrate contacts are provided by residues Asp218, His233, Met285, and 295-297; that span reads RMG.

Belongs to the THI4 family. Homooctamer. Fe cation serves as cofactor. In terms of processing, during the catalytic reaction, a sulfide is transferred from Cys-216 to a reaction intermediate, generating a dehydroalanine residue.

Its subcellular location is the cytoplasm. The protein resides in the nucleus. The catalysed reaction is [ADP-thiazole synthase]-L-cysteine + glycine + NAD(+) = [ADP-thiazole synthase]-dehydroalanine + ADP-5-ethyl-4-methylthiazole-2-carboxylate + nicotinamide + 3 H2O + 2 H(+). Its function is as follows. Involved in biosynthesis of the thiamine precursor thiazole. Catalyzes the conversion of NAD and glycine to adenosine diphosphate 5-(2-hydroxyethyl)-4-methylthiazole-2-carboxylic acid (ADT), an adenylated thiazole intermediate. The reaction includes an iron-dependent sulfide transfer from a conserved cysteine residue of the protein to a thiazole intermediate. The enzyme can only undergo a single turnover, which suggests it is a suicide enzyme. May have additional roles in adaptation to various stress conditions and in DNA damage tolerance. This Aspergillus oryzae (strain ATCC 42149 / RIB 40) (Yellow koji mold) protein is Thiamine thiazole synthase.